A 249-amino-acid polypeptide reads, in one-letter code: Ribonuclease 3 (249 aa).

In terms of domain architecture, RNase III spans 20–149; the sequence is FKKFQERISV…FIGALYLDQG (130 aa). Residue Glu62 participates in Mg(2+) binding. Asp66 is a catalytic residue. Mg(2+) contacts are provided by Asp135 and Glu138. Glu138 is a catalytic residue. The region spanning 175–244 is the DRBM domain; sequence DFKSQLQEFV…AQEALAKLQK (70 aa). The interval 225 to 249 is disordered; it reads RSKKEAEQHAAQEALAKLQKHHMKQ.

It belongs to the ribonuclease III family. Homodimer. Mg(2+) is required as a cofactor.

The protein resides in the cytoplasm. The catalysed reaction is Endonucleolytic cleavage to 5'-phosphomonoester.. Its function is as follows. Digests double-stranded RNA. Involved in the processing of primary rRNA transcript to yield the immediate precursors to the large and small rRNAs (23S and 16S). Processes some mRNAs, and tRNAs when they are encoded in the rRNA operon. Processes pre-crRNA and tracrRNA of type II CRISPR loci if present in the organism. The chain is Ribonuclease 3 from Bacillus licheniformis (strain ATCC 14580 / DSM 13 / JCM 2505 / CCUG 7422 / NBRC 12200 / NCIMB 9375 / NCTC 10341 / NRRL NRS-1264 / Gibson 46).